The sequence spans 714 residues: Fatty acid oxidation complex subunit alpha (714 aa).

Positions M1–P190 are enoyl-CoA hydratase. Positions A306 to Q714 are 3-hydroxyacyl-CoA dehydrogenase.

The protein in the N-terminal section; belongs to the enoyl-CoA hydratase/isomerase family. This sequence in the central section; belongs to the 3-hydroxyacyl-CoA dehydrogenase family. In terms of assembly, heterotetramer of two alpha chains (FadJ) and two beta chains (FadI).

It is found in the cytoplasm. It carries out the reaction a (3S)-3-hydroxyacyl-CoA = a (2E)-enoyl-CoA + H2O. It catalyses the reaction a 4-saturated-(3S)-3-hydroxyacyl-CoA = a (3E)-enoyl-CoA + H2O. The enzyme catalyses a (3S)-3-hydroxyacyl-CoA + NAD(+) = a 3-oxoacyl-CoA + NADH + H(+). The catalysed reaction is (3S)-3-hydroxybutanoyl-CoA = (3R)-3-hydroxybutanoyl-CoA. The protein operates within lipid metabolism; fatty acid beta-oxidation. Functionally, catalyzes the formation of a hydroxyacyl-CoA by addition of water on enoyl-CoA. Also exhibits 3-hydroxyacyl-CoA epimerase and 3-hydroxyacyl-CoA dehydrogenase activities. This is Fatty acid oxidation complex subunit alpha from Escherichia coli (strain UTI89 / UPEC).